A 173-amino-acid chain; its full sequence is NADH-ubiquinone oxidoreductase chain 6 (173 aa).

Helical transmembrane passes span 1–21, 27–47, 48–68, 87–107, and 139–159; these read MTYF…AVAS, YGVV…VSLG, VSFV…VVFV, VVGY…LGGL, and CGVG…FVVL.

It belongs to the complex I subunit 6 family. Core subunit of respiratory chain NADH dehydrogenase (Complex I) which is composed of 45 different subunits.

Its subcellular location is the mitochondrion inner membrane. The catalysed reaction is a ubiquinone + NADH + 5 H(+)(in) = a ubiquinol + NAD(+) + 4 H(+)(out). Core subunit of the mitochondrial membrane respiratory chain NADH dehydrogenase (Complex I) which catalyzes electron transfer from NADH through the respiratory chain, using ubiquinone as an electron acceptor. Essential for the catalytic activity and assembly of complex I. The chain is NADH-ubiquinone oxidoreductase chain 6 (MT-ND6) from Gallus gallus (Chicken).